Here is a 513-residue protein sequence, read N- to C-terminus: Transmembrane protein 151B (513 aa).

The interval 1 to 29 (MSPAAPVTESSAAEVHREQTDAPREPQRP) is disordered. The span at 14 to 28 (EVHREQTDAPREPQR) shows a compositional bias: basic and acidic residues. 3 helical membrane passes run 46–66 (CLLLSLLMYCCVIAMTWCQVT), 93–113 (YIYIPVAFLVMLYVVYLVECW), and 274–294 (LPWYASTCSFWLAAAFTLSWP). N-linked (GlcNAc...) asparagine glycans are attached at residues Asn-366, Asn-418, and Asn-505.

The protein belongs to the TMEM151 family.

The protein resides in the membrane. In Danio rerio (Zebrafish), this protein is Transmembrane protein 151B (tmem151b).